We begin with the raw amino-acid sequence, 397 residues long: Dual-specificity RNA methyltransferase RlmN (397 aa).

The active-site Proton acceptor is Glu-120. Residues 126 to 369 enclose the Radical SAM core domain; the sequence is ETDRGTLCVS…VRTPRGRDIL (244 aa). Cys-133 and Cys-372 form a disulfide bridge. [4Fe-4S] cluster contacts are provided by Cys-140, Cys-144, and Cys-147. S-adenosyl-L-methionine-binding positions include 198-199, Ser-230, 252-254, and Asn-329; these read GE and SLH. The active-site S-methylcysteine intermediate is Cys-372.

Belongs to the radical SAM superfamily. RlmN family. [4Fe-4S] cluster serves as cofactor.

It localises to the cytoplasm. The enzyme catalyses adenosine(2503) in 23S rRNA + 2 reduced [2Fe-2S]-[ferredoxin] + 2 S-adenosyl-L-methionine = 2-methyladenosine(2503) in 23S rRNA + 5'-deoxyadenosine + L-methionine + 2 oxidized [2Fe-2S]-[ferredoxin] + S-adenosyl-L-homocysteine. It carries out the reaction adenosine(37) in tRNA + 2 reduced [2Fe-2S]-[ferredoxin] + 2 S-adenosyl-L-methionine = 2-methyladenosine(37) in tRNA + 5'-deoxyadenosine + L-methionine + 2 oxidized [2Fe-2S]-[ferredoxin] + S-adenosyl-L-homocysteine. Its function is as follows. Specifically methylates position 2 of adenine 2503 in 23S rRNA and position 2 of adenine 37 in tRNAs. m2A2503 modification seems to play a crucial role in the proofreading step occurring at the peptidyl transferase center and thus would serve to optimize ribosomal fidelity. In Nitrobacter winogradskyi (strain ATCC 25391 / DSM 10237 / CIP 104748 / NCIMB 11846 / Nb-255), this protein is Dual-specificity RNA methyltransferase RlmN.